The following is a 124-amino-acid chain: Small ribosomal subunit protein uS12 (124 aa).

The disordered stretch occupies residues 1 to 28 (MPTISQLVGSERKRLTKKTKSPALKSCP). Residue aspartate 89 is modified to 3-methylthioaspartic acid. The disordered stretch occupies residues 104 to 124 (TAGVKDRRQSRSKYGAKAPKD).

This sequence belongs to the universal ribosomal protein uS12 family. As to quaternary structure, part of the 30S ribosomal subunit. Contacts proteins S8 and S17. May interact with IF1 in the 30S initiation complex.

In terms of biological role, with S4 and S5 plays an important role in translational accuracy. Interacts with and stabilizes bases of the 16S rRNA that are involved in tRNA selection in the A site and with the mRNA backbone. Located at the interface of the 30S and 50S subunits, it traverses the body of the 30S subunit contacting proteins on the other side and probably holding the rRNA structure together. The combined cluster of proteins S8, S12 and S17 appears to hold together the shoulder and platform of the 30S subunit. The protein is Small ribosomal subunit protein uS12 of Prochlorococcus marinus (strain MIT 9301).